Reading from the N-terminus, the 321-residue chain is Lipoyl synthase (321 aa).

Cys68, Cys73, Cys79, Cys94, Cys98, Cys101, and Ser308 together coordinate [4Fe-4S] cluster. The Radical SAM core domain occupies 80–297 (FNHGTATFMI…KEIALELGFT (218 aa)).

It belongs to the radical SAM superfamily. Lipoyl synthase family. The cofactor is [4Fe-4S] cluster.

The protein localises to the cytoplasm. It catalyses the reaction [[Fe-S] cluster scaffold protein carrying a second [4Fe-4S](2+) cluster] + N(6)-octanoyl-L-lysyl-[protein] + 2 oxidized [2Fe-2S]-[ferredoxin] + 2 S-adenosyl-L-methionine + 4 H(+) = [[Fe-S] cluster scaffold protein] + N(6)-[(R)-dihydrolipoyl]-L-lysyl-[protein] + 4 Fe(3+) + 2 hydrogen sulfide + 2 5'-deoxyadenosine + 2 L-methionine + 2 reduced [2Fe-2S]-[ferredoxin]. It functions in the pathway protein modification; protein lipoylation via endogenous pathway; protein N(6)-(lipoyl)lysine from octanoyl-[acyl-carrier-protein]: step 2/2. In terms of biological role, catalyzes the radical-mediated insertion of two sulfur atoms into the C-6 and C-8 positions of the octanoyl moiety bound to the lipoyl domains of lipoate-dependent enzymes, thereby converting the octanoylated domains into lipoylated derivatives. This is Lipoyl synthase from Vibrio cholerae serotype O1 (strain ATCC 39541 / Classical Ogawa 395 / O395).